A 298-amino-acid chain; its full sequence is UDP-N-acetylenolpyruvoylglucosamine reductase (298 aa).

In terms of domain architecture, FAD-binding PCMH-type spans 26–191 (KTGGAADVFV…LDATFSLALE (166 aa)). R170 is a catalytic residue. S220 acts as the Proton donor in catalysis. E290 is an active-site residue.

It belongs to the MurB family. It depends on FAD as a cofactor.

It localises to the cytoplasm. It carries out the reaction UDP-N-acetyl-alpha-D-muramate + NADP(+) = UDP-N-acetyl-3-O-(1-carboxyvinyl)-alpha-D-glucosamine + NADPH + H(+). It functions in the pathway cell wall biogenesis; peptidoglycan biosynthesis. Functionally, cell wall formation. The sequence is that of UDP-N-acetylenolpyruvoylglucosamine reductase from Listeria monocytogenes serovar 1/2a (strain ATCC BAA-679 / EGD-e).